A 148-amino-acid polypeptide reads, in one-letter code: Single-stranded DNA-binding protein 2 (148 aa).

Positions 4–109 (INSVIIAGNL…IKARRIQFLN (106 aa)) constitute an SSB domain.

In terms of assembly, homotetramer.

The protein is Single-stranded DNA-binding protein 2 (ssb2) of Chlorobaculum tepidum (strain ATCC 49652 / DSM 12025 / NBRC 103806 / TLS) (Chlorobium tepidum).